Reading from the N-terminus, the 710-residue chain is Adenylosuccinate synthetase (710 aa).

2 disordered regions span residues 1-51 (MPVR…PVPQ) and 84-111 (DEPP…GRSK). 2 stretches are compositionally biased toward polar residues: residues 10-27 (YNNS…STTA) and 101-111 (ANASSSSGRSK). GTP-binding positions include 180 to 186 (GDEGKGK) and 210 to 212 (GHT). The active-site Proton acceptor is aspartate 181. Mg(2+) is bound by residues aspartate 181 and glycine 210. IMP is bound by residues 181–184 (DEGK), 208–211 (NAGH), threonine 295, lysine 309, glutamine 421, threonine 437, and lysine 567. The active-site Proton donor is histidine 211. Residue 563–569 (AVTKKPR) coordinates substrate. Residues arginine 569 and 697-699 (GNG) each bind GTP.

This sequence belongs to the adenylosuccinate synthetase family. In terms of assembly, homodimer. Mg(2+) is required as a cofactor.

The protein localises to the cytoplasm. It catalyses the reaction IMP + L-aspartate + GTP = N(6)-(1,2-dicarboxyethyl)-AMP + GDP + phosphate + 2 H(+). It participates in purine metabolism; AMP biosynthesis via de novo pathway; AMP from IMP: step 1/2. In terms of biological role, plays an important role in the salvage pathway for purine nucleotide biosynthesis. Catalyzes the first committed step in the biosynthesis of AMP from IMP. The sequence is that of Adenylosuccinate synthetase from Leishmania infantum.